The chain runs to 546 residues: Nuclear pore complex protein Nup58 (546 aa).

Tandem repeats lie at residues 22–23 (FG), 36–37 (FG), 45–46 (FG), 64–65 (FG), 73–74 (FG), 82–83 (FG), 92–93 (FG), 101–102 (FG), 110–111 (FG), 119–120 (FG), 128–129 (FG), 137–138 (FG), 146–147 (FG), 155–156 (FG), 166–167 (FG), 197–198 (FG), and 199–200 (FG). A 17 X 2 AA repeats of F-G region spans residues 22-200 (FGARPATTTA…TTAPPAFGFG (179 aa)).

The protein belongs to the NUP58 family. As to quaternary structure, component of the nuclear pore complex. Interacts with Nup54. Interacts (via C-terminus) with fs(1)Yb; this interaction occurs in a RNA-independent manner. Interacts with sbr/nxf1. Interacts with Nxt1. Post-translationally, O-glycosylated; contains O-GlcNAc. O-GlcNAcylation increases with increasing ambient temperature.

Its subcellular location is the nucleus. The protein resides in the nuclear pore complex. Its function is as follows. Component of the nuclear pore complex, a complex required for the trafficking across the nuclear membrane. Together with Nup54, required for transposable element silencing regulation in ovarian follicle cells. By interacting with the nuclear (Nxf1/Nxt1) and cytosolic (fs(1)Yb) components of the flamenco (flam) transcripts processing pathway, enables export and subsequent piRNA production. The chain is Nuclear pore complex protein Nup58 from Drosophila melanogaster (Fruit fly).